The primary structure comprises 465 residues: Fumarate hydratase class II (465 aa).

Substrate is bound by residues 98-100 (SGT), arginine 126, 129-132 (HPND), 139-141 (SSN), and threonine 187. Histidine 188 acts as the Proton donor/acceptor in catalysis. Serine 318 is a catalytic residue. Substrate is bound by residues serine 319 and 324–326 (KVN).

The protein belongs to the class-II fumarase/aspartase family. Fumarase subfamily. In terms of assembly, homotetramer.

It is found in the cytoplasm. The catalysed reaction is (S)-malate = fumarate + H2O. It functions in the pathway carbohydrate metabolism; tricarboxylic acid cycle; (S)-malate from fumarate: step 1/1. Involved in the TCA cycle. Catalyzes the stereospecific interconversion of fumarate to L-malate. In Yersinia pestis, this protein is Fumarate hydratase class II.